A 474-amino-acid polypeptide reads, in one-letter code: Cysteine protease ATG4A (474 aa).

The tract at residues 1–32 (MTSLPGRGVSPSSSDPLCEGNAAPSSSSSSGQ) is disordered. Catalysis depends on C161, which acts as the Nucleophile. Active-site residues include D358 and H360. The segment covering 439–449 (KQMYNEESSSG) has biased composition (polar residues). Residues 439–474 (KQMYNEESSSGDGMDSINVEGLDGSGETGEEEWQIL) are disordered.

It belongs to the peptidase C54 family. As to quaternary structure, interacts with ATG8.

The protein resides in the cytoplasm. The enzyme catalyses [protein]-C-terminal L-amino acid-glycyl-phosphatidylethanolamide + H2O = [protein]-C-terminal L-amino acid-glycine + a 1,2-diacyl-sn-glycero-3-phosphoethanolamine. Its function is as follows. Cysteine protease that plays a key role in autophagy by mediating both proteolytic activation and delipidation of ATG8 family proteins. The protease activity is required for proteolytic activation of ATG8 family proteins: cleaves the C-terminal amino acid of ATG8 proteins to reveal a C-terminal glycine. Exposure of the glycine at the C-terminus is essential for ATG8 proteins conjugation to phosphatidylethanolamine (PE) and insertion to membranes, which is necessary for autophagy. In addition to the protease activity, also mediates delipidation of PE-conjugated ATG8 proteins. The polypeptide is Cysteine protease ATG4A (ATG4A) (Oryza sativa subsp. japonica (Rice)).